A 296-amino-acid chain; its full sequence is uncharacterized protein (296 aa).

Disordered stretches follow at residues 1 to 45 (MSAT…LGEN) and 200 to 296 (EQVV…SESE). Acidic residues predominate over residues 201–220 (QVVDDYPADSDDDTDAESDD). The segment covering 236–249 (SSVSSCGSFITDGS) has biased composition (polar residues). Positions 250-296 (GSEESEDSASDETDDSDFDTDELTSESEEEESESESESESESESESE) are enriched in acidic residues.

This is an uncharacterized protein from Ictaluridae (bullhead catfishes).